The chain runs to 1058 residues: Translation initiation factor IF-2 (1058 aa).

Basic and acidic residues predominate over residues 1 to 12 (MNDTKTPGDKTL). Positions 1 to 468 (MNDTKTPGDK…MTGHRGMQES (468 aa)) are disordered. A compositionally biased stretch (low complexity) spans 54–81 (APGEAGAPSGTPAAAPAATPAPAAAAPR). Positions 82–95 (PATPAPAAPRPAAP) are enriched in pro residues. A compositionally biased stretch (low complexity) spans 96-108 (ATPAQPAAEAKAP). The span at 109 to 119 (APAPTPAPAAP) shows a compositional bias: pro residues. Low complexity-rich tracts occupy residues 120–156 (AAPV…VEVP) and 164–228 (EPVA…QRPG). Residues 244 to 271 (RSGGPGSDRRGGPGGQNRPGQNRQGGSG) are compositionally biased toward gly residues. The segment covering 292 to 364 (ARVREVEERR…ARKRFGEETG (73 aa)) has biased composition (basic and acidic residues). The span at 368–396 (GASAPSTSTARPLTPRPAGTTTTTGAPAA) shows a compositional bias: low complexity. A compositionally biased stretch (basic residues) spans 452-461 (FRRRTQRMTG). The region spanning 555–725 (PRPPVVTIMG…SLQSEVLDLK (171 aa)) is the tr-type G domain. Residues 564–571 (GHVDHGKT) form a G1 region. GTP is bound at residue 564-571 (GHVDHGKT). The tract at residues 589–593 (GITQH) is G2. The G3 stretch occupies residues 611-614 (DTPG). GTP is bound by residues 611 to 615 (DTPGH) and 665 to 668 (NKID). A G4 region spans residues 665 to 668 (NKID). The tract at residues 701–703 (SAT) is G5.

It belongs to the TRAFAC class translation factor GTPase superfamily. Classic translation factor GTPase family. IF-2 subfamily.

Its subcellular location is the cytoplasm. One of the essential components for the initiation of protein synthesis. Protects formylmethionyl-tRNA from spontaneous hydrolysis and promotes its binding to the 30S ribosomal subunits. Also involved in the hydrolysis of GTP during the formation of the 70S ribosomal complex. The sequence is that of Translation initiation factor IF-2 from Azorhizobium caulinodans (strain ATCC 43989 / DSM 5975 / JCM 20966 / LMG 6465 / NBRC 14845 / NCIMB 13405 / ORS 571).